Consider the following 112-residue polypeptide: Small ribosomal subunit protein bS6 (112 aa).

Belongs to the bacterial ribosomal protein bS6 family.

Binds together with bS18 to 16S ribosomal RNA. This is Small ribosomal subunit protein bS6 from Christiangramia forsetii (strain DSM 17595 / CGMCC 1.15422 / KT0803) (Gramella forsetii).